We begin with the raw amino-acid sequence, 387 residues long: Chaperone protein DnaJ (387 aa).

The 65-residue stretch at 6–70 (DYYETLGVSR…QKRAAYDQYG (65 aa)) folds into the J domain. The CR-type zinc-finger motif lies at 143–225 (GKDTKISYDR…CHGTGHEQER (83 aa)). Zn(2+)-binding residues include Cys-156, Cys-159, Cys-173, Cys-176, Cys-199, Cys-202, Cys-213, and Cys-216. CXXCXGXG motif repeat units follow at residues 156 to 163 (CHTCNGSG), 173 to 180 (CHKCHGSG), 199 to 206 (CDVCGGTG), and 213 to 220 (CPTCHGTG).

This sequence belongs to the DnaJ family. In terms of assembly, homodimer. It depends on Zn(2+) as a cofactor.

It localises to the cytoplasm. Participates actively in the response to hyperosmotic and heat shock by preventing the aggregation of stress-denatured proteins and by disaggregating proteins, also in an autonomous, DnaK-independent fashion. Unfolded proteins bind initially to DnaJ; upon interaction with the DnaJ-bound protein, DnaK hydrolyzes its bound ATP, resulting in the formation of a stable complex. GrpE releases ADP from DnaK; ATP binding to DnaK triggers the release of the substrate protein, thus completing the reaction cycle. Several rounds of ATP-dependent interactions between DnaJ, DnaK and GrpE are required for fully efficient folding. Also involved, together with DnaK and GrpE, in the DNA replication of plasmids through activation of initiation proteins. The protein is Chaperone protein DnaJ of Lacticaseibacillus paracasei (strain ATCC 334 / BCRC 17002 / CCUG 31169 / CIP 107868 / KCTC 3260 / NRRL B-441) (Lactobacillus paracasei).